We begin with the raw amino-acid sequence, 78 residues long: Acyl carrier protein (78 aa).

The region spanning 1–75 is the Carrier domain; the sequence is MIKEKILSIV…DLISVVKNST (75 aa). At Ser35 the chain carries O-(pantetheine 4'-phosphoryl)serine.

It belongs to the acyl carrier protein (ACP) family. In terms of processing, 4'-phosphopantetheine is transferred from CoA to a specific serine of apo-ACP by AcpS. This modification is essential for activity because fatty acids are bound in thioester linkage to the sulfhydryl of the prosthetic group.

The protein localises to the cytoplasm. Its pathway is lipid metabolism; fatty acid biosynthesis. Its function is as follows. Carrier of the growing fatty acid chain in fatty acid biosynthesis. This Shigella flexneri protein is Acyl carrier protein (acpP).